Reading from the N-terminus, the 891-residue chain is Mating-type protein A-alpha Z3 (891 aa).

A DNA-binding region (homeobox; TALE-type) is located at residues 111 to 189 (EWQENMPPVP…AARIRIGWTH (79 aa)). The segment covering 331–360 (AAHEKRQQARREQRQAKNERDAAQMREEQR) has biased composition (basic and acidic residues). 4 disordered regions span residues 331–592 (AAHE…VNWD), 606–671 (YLDS…ASET), 779–812 (SILS…VEPS), and 836–861 (PKKD…SPDT). Acidic residues-rich tracts occupy residues 369-400 (SSDD…SDSD) and 427-457 (ADDE…EEDT). Composition is skewed to low complexity over residues 542 to 559 (PSKT…KSST) and 612 to 650 (SSRP…SSVS). Residues 651–660 (TCETVGTDSS) show a composition bias toward polar residues. Basic and acidic residues predominate over residues 841–850 (RYAERAERRA).

Belongs to the TALE/M-ATYP homeobox family.

The protein localises to the nucleus. In terms of biological role, specifies A-alpha-3 mating-type. May regulate the expression of genes specific to the homokaryotic cell type. This is Mating-type protein A-alpha Z3 from Schizophyllum commune (Split gill fungus).